A 320-amino-acid chain; its full sequence is Methyltransferase gedG (320 aa).

Positions 61–154 (DAGAGNGVYS…QLRPGGTFAC (94 aa)) are methyltransferase domain. A disordered region spans residues 231–252 (GLLPPERRGEVTEPDHEGPHDQ). Over residues 235-252 (PERRGEVTEPDHEGPHDQ) the composition is skewed to basic and acidic residues.

The protein belongs to the methyltransferase superfamily.

It participates in secondary metabolite biosynthesis. Its function is as follows. Methyltransferase; part of the gene cluster that mediates the biosynthesis of geodin, an intermediate in the biosynthesis of other natural products. The pathway begins with the synthesis of atrochrysone thioester by the polyketide synthase (PKS) gedC. The atrochrysone carboxyl ACP thioesterase gedB then breaks the thioester bond and releases the atrochrysone carboxylic acid from gedC. The atrochrysone carboxylic acid is then converted to atrochrysone which is further transformed into emodinanthrone. The next step is performed by the emodinanthrone oxygenase gedH that catalyzes the oxidation of emodinanthrone to emodin. Emodin O-methyltransferase encoded probably by gedA then catalyzes methylation of the 8-hydroxy group of emodin to form questin. Ring cleavage of questin by questin oxidase gedK leads to desmethylsulochrin via several intermediates including questin epoxide. Another methylation step probably catalyzed by methyltransferase gedG leads to the formation of sulochrin which is further converted to dihydrogeodin by the sulochrin halogenase gedL. Finally, the dihydrogeodin oxidase gedJ catalyzes the stereospecific phenol oxidative coupling reaction converting dihydrogeodin to geodin. The sequence is that of Methyltransferase gedG from Aspergillus terreus (strain NIH 2624 / FGSC A1156).